The following is a 398-amino-acid chain: 8-amino-7-oxononanoate synthase (398 aa).

Arg-26 is a substrate binding site. 113-114 is a binding site for pyridoxal 5'-phosphate; sequence GF. His-138 is a binding site for substrate. Pyridoxal 5'-phosphate-binding residues include Ser-181, His-209, and Thr-238. Position 241 is an N6-(pyridoxal phosphate)lysine (Lys-241). Thr-355 contributes to the substrate binding site.

It belongs to the class-II pyridoxal-phosphate-dependent aminotransferase family. BioF subfamily. As to quaternary structure, homodimer. It depends on pyridoxal 5'-phosphate as a cofactor.

The enzyme catalyses 6-carboxyhexanoyl-[ACP] + L-alanine + H(+) = (8S)-8-amino-7-oxononanoate + holo-[ACP] + CO2. The protein operates within cofactor biosynthesis; biotin biosynthesis. Its function is as follows. Catalyzes the decarboxylative condensation of pimeloyl-[acyl-carrier protein] and L-alanine to produce 8-amino-7-oxononanoate (AON), [acyl-carrier protein], and carbon dioxide. This chain is 8-amino-7-oxononanoate synthase, found in Aeromonas salmonicida (strain A449).